The following is a 358-amino-acid chain: Photosystem II protein D1 3 (358 aa).

3 helical membrane-spanning segments follow: residues 28–45 (YIGW…AATT), 117–132 (HFLI…QWEL), and 141–155 (WICV…AAMA). Histidine 117 provides a ligand contact to chlorophyll a. Residue tyrosine 125 coordinates pheophytin a. 2 residues coordinate [CaMn4O5] cluster: aspartate 169 and glutamate 188. The helical transmembrane segment at 196–217 (FHMLGVAGVFGGSLFSAMHGSL) threads the bilayer. Histidine 197 serves as a coordination point for chlorophyll a. Residues histidine 214 and 263 to 264 (SF) contribute to the a quinone site. Histidine 214 is a binding site for Fe cation. Histidine 271 is a binding site for Fe cation. The chain crosses the membrane as a helical span at residues 273-287 (LLGAWPVVGIWFTSM). [CaMn4O5] cluster is bound by residues histidine 331, glutamate 332, aspartate 341, and alanine 343. Residues 344 to 358 (TVESTPVALQAPAIG) constitute a propeptide that is removed on maturation.

Belongs to the reaction center PufL/M/PsbA/D family. PSII is composed of 1 copy each of membrane proteins PsbA, PsbB, PsbC, PsbD, PsbE, PsbF, PsbH, PsbI, PsbJ, PsbK, PsbL, PsbM, PsbT, PsbX, PsbY, PsbZ, Psb30/Ycf12, peripheral proteins PsbO, CyanoQ (PsbQ), PsbU, PsbV and a large number of cofactors. It forms dimeric complexes. It depends on The D1/D2 heterodimer binds P680, chlorophylls that are the primary electron donor of PSII, and subsequent electron acceptors. It shares a non-heme iron and each subunit binds pheophytin, quinone, additional chlorophylls, carotenoids and lipids. D1 provides most of the ligands for the Mn4-Ca-O5 cluster of the oxygen-evolving complex (OEC). There is also a Cl(-1) ion associated with D1 and D2, which is required for oxygen evolution. The PSII complex binds additional chlorophylls, carotenoids and specific lipids. as a cofactor. In terms of processing, tyr-160 forms a radical intermediate that is referred to as redox-active TyrZ, YZ or Y-Z. C-terminally processed by CtpA; processing is essential to allow assembly of the oxygen-evolving complex and thus photosynthetic growth.

The protein localises to the cellular thylakoid membrane. The enzyme catalyses 2 a plastoquinone + 4 hnu + 2 H2O = 2 a plastoquinol + O2. In terms of biological role, photosystem II (PSII) is a light-driven water:plastoquinone oxidoreductase that uses light energy to abstract electrons from H(2)O, generating O(2) and a proton gradient subsequently used for ATP formation. It consists of a core antenna complex that captures photons, and an electron transfer chain that converts photonic excitation into a charge separation. The D1/D2 (PsbA/PsbD) reaction center heterodimer binds P680, the primary electron donor of PSII as well as several subsequent electron acceptors. This is Photosystem II protein D1 3 from Synechococcus sp. (strain CC9311).